Here is a 133-residue protein sequence, read N- to C-terminus: MSAEKEYILDEISQHTTTESCWLIIGNASNGGPKVYDVTKYLDDHPGGAEVMLDVAGQDADEFFEDIGHSKEARAELKNYLVGNFKIDAATLAKMKADAEAKAQQKNSGTGIMLIVLMALFAIAYGYYQTQMK.

In terms of domain architecture, Cytochrome b5 heme-binding spans 4–86 (EKEYILDEIS…LKNYLVGNFK (83 aa)). Residues H45 and H69 each coordinate heme. Residues 108 to 128 (SGTGIMLIVLMALFAIAYGYY) form a helical membrane-spanning segment.

It belongs to the cytochrome b5 family. As to quaternary structure, interacts with alternative squalene epoxidase PHATRDRAFT_45494.

The protein resides in the endoplasmic reticulum membrane. Functionally, hemoprotein that functions as an electron carrier for membrane bound monooxygenases involved in sterol biosynthesis. In Phaeodactylum tricornutum (strain CCAP 1055/1), this protein is Cytochrome b5.